The primary structure comprises 616 residues: Membrane protein insertase YidC (616 aa).

Residues 9–29 (ILAVILSGLVLIAWQYFYNVP) traverse the membrane as a helical segment. The interval 37–80 (QQQAQAELQKTTPQPTASATPGATPQSGGAAQPSTPAAGQQAQP) is disordered. Residues 44–71 (LQKTTPQPTASATPGATPQSGGAAQPST) show a composition bias toward polar residues. A run of 4 helical transmembrane segments spans residues 388-408 (FFGN…LLFF), 462-482 (LPVV…FVTI), 520-540 (VFGH…TMWF), and 559-579 (WMPL…VIYW).

The protein belongs to the OXA1/ALB3/YidC family. Type 1 subfamily. In terms of assembly, interacts with the Sec translocase complex via SecD. Specifically interacts with transmembrane segments of nascent integral membrane proteins during membrane integration.

Its subcellular location is the cell inner membrane. Functionally, required for the insertion and/or proper folding and/or complex formation of integral membrane proteins into the membrane. Involved in integration of membrane proteins that insert both dependently and independently of the Sec translocase complex, as well as at least some lipoproteins. Aids folding of multispanning membrane proteins. In Bradyrhizobium diazoefficiens (strain JCM 10833 / BCRC 13528 / IAM 13628 / NBRC 14792 / USDA 110), this protein is Membrane protein insertase YidC.